The sequence spans 157 residues: uncharacterized protein (157 aa).

Transmembrane regions (helical) follow at residues 3 to 23, 24 to 44, 47 to 67, and 105 to 125; these read IFSFFSADFWQANSLCFMFIS, AFLSATVLPGNSEVIFVALAV, LMLGSLFNVDILALILIATAG, and IALLLSWLPVVGDLFCAIAGW.

This sequence to E.coli YqaA.

It localises to the cell membrane. This is an uncharacterized protein from Haemophilus influenzae (strain ATCC 51907 / DSM 11121 / KW20 / Rd).